Consider the following 417-residue polypeptide: D-galactonate dehydratase family member RspA (417 aa).

2 residues coordinate substrate: Gln43 and His127. Tyr158 (proton donor/acceptor) is an active-site residue. Asp223 is a Mg(2+) binding site. The active-site Proton donor/acceptor is His225. Positions 249 and 275 each coordinate Mg(2+). Residues Glu275, Arg296, His325, Asp329, and Glu352 each coordinate substrate.

The protein belongs to the mandelate racemase/muconate lactonizing enzyme family. GalD subfamily. It depends on Mg(2+) as a cofactor.

It catalyses the reaction D-gluconate = 2-dehydro-3-deoxy-D-gluconate + H2O. Has low D-gluconate dehydratase activity (in vitro), suggesting that it has no significant role in D-gluconate degradation in vivo. Has no detectable activity with a panel of 70 other acid sugars (in vitro). This chain is D-galactonate dehydratase family member RspA (rspA), found in Pantoea ananatis (strain LMG 20103).